A 399-amino-acid polypeptide reads, in one-letter code: Phosphoglycerate kinase (399 aa).

Residues 22–24 (DFN), R38, 61–64 (HLGR), R120, and R153 each bind substrate. Residues K204, E326, and 352–355 (GGDT) contribute to the ATP site.

This sequence belongs to the phosphoglycerate kinase family. As to quaternary structure, monomer.

The protein resides in the cytoplasm. It carries out the reaction (2R)-3-phosphoglycerate + ATP = (2R)-3-phospho-glyceroyl phosphate + ADP. It functions in the pathway carbohydrate degradation; glycolysis; pyruvate from D-glyceraldehyde 3-phosphate: step 2/5. This is Phosphoglycerate kinase from Geobacter sp. (strain M21).